A 576-amino-acid polypeptide reads, in one-letter code: Carboxypeptidase S (576 aa).

At 1–19 (MIALPVEKAPRKSLWQRHR) the chain is on the cytoplasmic side. Lysine 8 is covalently cross-linked (Glycyl lysine isopeptide (Lys-Gly) (interchain with G-Cter in ubiquitin)). Residues 20-40 (AFISGIVALIIIGTFFLTSGL) form a helical membrane-spanning segment. Residues 41–576 (HPAPPHEAKR…EYIVNVNEYA (536 aa)) are Lumenal-facing. Residues 44 to 65 (PPHEAKRPHHGKGPMHSPKCEK) are disordered. Asparagine 88 is a glycosylation site (N-linked (GlcNAc...) asparagine). Histidine 168 contacts Zn(2+). The active site involves aspartate 170. An N-linked (GlcNAc...) asparagine glycan is attached at asparagine 176. Aspartate 205 is a binding site for Zn(2+). N-linked (GlcNAc...) asparagine glycosylation is present at asparagine 228. Glutamate 239 acts as the Proton acceptor in catalysis. Zn(2+) is bound by residues glutamate 240 and aspartate 268. N-linked (GlcNAc...) asparagine glycosylation is found at asparagine 381 and asparagine 525. Histidine 547 provides a ligand contact to Zn(2+).

Belongs to the peptidase M20A family. YscS is synthesized as one polypeptide chain precursor which after carbohydrate modification in the secretory pathway yields two active precursor molecules. The proteolytically unprocessed forms are associated with the membrane, whereas the mature forms of the enzyme are soluble. Requires Zn(2+) as cofactor. In terms of processing, glycosylated. Ubiquitinated. Ubiquitination mediates sorting into internal vesicles in late endosomes. TUL1 is required for ubiquitination.

The protein resides in the vacuole membrane. It carries out the reaction Release of a C-terminal amino acid from a peptide in which glycine is the penultimate amino acid, e.g. Z-Gly-|-Leu.. In terms of biological role, necessary for use of certain peptides as sole nitrogen source. May also cleave intracellularly generated peptides to recycle amino acids for protein synthesis. The protein is Carboxypeptidase S (CPS1) of Saccharomyces cerevisiae (strain ATCC 204508 / S288c) (Baker's yeast).